Reading from the N-terminus, the 458-residue chain is MVSLKVCFLLLASSELAFGAAPGARSRRRGTAPANPYDKDTTSYCTWWLDYNEELPCDQVLQANSITLEKFRRWVSGGQSNTPINQWENHKANHKAKNPSITGNCEGMTVGKSYCVEAAFEPTPTASPTGPSGPTGTPGTIETPLPTQPEIAPNCDAFHLVKQGEDCGTISATYGITSAQFLAWNPSAGKDCTGLWANAYACVSIVGHEPPKTTSQAPQPTPTKPSNGIETPLPTQPKIVDNCDKFHLVQSGEGCAAITSKYGISLAQFTQWNPAAGSNCEGLWANAYACVSIIGHEPMPTPTKPSNGIETPLPTQPEIVDNCNKFYLVQSGDTCTTIVSKYGITLSDFTKWNPKAGNTCAGLWANAYSCVSIIGYTPKPSPTPTPTKPPNGIQTPTPIQNGMVTNCNKFHFVENGNTCPVIQAKYKVTLADLVRWNPAIKADCTGLWAKTYLCVGTL.

A signal peptide spans 1–19; it reads MVSLKVCFLLLASSELAFG. Residues 157–203 enclose the LysM 1 domain; sequence AFHLVKQGEDCGTISATYGITSAQFLAWNPSAGKDCTGLWANAYACV. A disordered region spans residues 210 to 232; sequence PPKTTSQAPQPTPTKPSNGIETP. Positions 212 to 229 are enriched in polar residues; the sequence is KTTSQAPQPTPTKPSNGI. 3 consecutive LysM domains span residues 245–291, 325–371, and 409–455; these read KFHL…YACV, KFYL…YSCV, and KFHF…YLCV.

The protein localises to the secreted. Functionally, might have a role in sequestration of chitin oligosaccharides (breakdown products of fungal cell walls that are released during invasion and act as triggers of host immunity) to dampen host defense. The sequence is that of LysM domain-containing protein ARB_05157 from Arthroderma benhamiae (strain ATCC MYA-4681 / CBS 112371) (Trichophyton mentagrophytes).